Reading from the N-terminus, the 107-residue chain is Nucleoid-associated protein BAbS19_I00290 (107 aa).

It belongs to the YbaB/EbfC family. In terms of assembly, homodimer.

It is found in the cytoplasm. The protein resides in the nucleoid. In terms of biological role, binds to DNA and alters its conformation. May be involved in regulation of gene expression, nucleoid organization and DNA protection. The polypeptide is Nucleoid-associated protein BAbS19_I00290 (Brucella abortus (strain S19)).